The chain runs to 485 residues: Glutamate--tRNA ligase (485 aa).

The 'HIGH' region signature appears at 11–21 (PSPTGHLHIGN). Residues 252-256 (KLSKR) carry the 'KMSKS' region motif. Lys255 is an ATP binding site.

This sequence belongs to the class-I aminoacyl-tRNA synthetase family. Glutamate--tRNA ligase type 1 subfamily. Monomer.

Its subcellular location is the cytoplasm. It carries out the reaction tRNA(Glu) + L-glutamate + ATP = L-glutamyl-tRNA(Glu) + AMP + diphosphate. Catalyzes the attachment of glutamate to tRNA(Glu) in a two-step reaction: glutamate is first activated by ATP to form Glu-AMP and then transferred to the acceptor end of tRNA(Glu). This chain is Glutamate--tRNA ligase, found in Bacillus cereus (strain ATCC 14579 / DSM 31 / CCUG 7414 / JCM 2152 / NBRC 15305 / NCIMB 9373 / NCTC 2599 / NRRL B-3711).